A 422-amino-acid polypeptide reads, in one-letter code: Enolase (422 aa).

Q162 lines the (2R)-2-phosphoglycerate pocket. The Proton donor role is filled by E204. Residues D241, E284, and D311 each contribute to the Mg(2+) site. Positions 336, 365, 366, and 387 each coordinate (2R)-2-phosphoglycerate. Residue K336 is the Proton acceptor of the active site.

This sequence belongs to the enolase family. Mg(2+) serves as cofactor.

The protein resides in the cytoplasm. The protein localises to the secreted. It is found in the cell surface. It catalyses the reaction (2R)-2-phosphoglycerate = phosphoenolpyruvate + H2O. It participates in carbohydrate degradation; glycolysis; pyruvate from D-glyceraldehyde 3-phosphate: step 4/5. Catalyzes the reversible conversion of 2-phosphoglycerate (2-PG) into phosphoenolpyruvate (PEP). It is essential for the degradation of carbohydrates via glycolysis. This Thermus thermophilus (strain ATCC 27634 / DSM 579 / HB8) protein is Enolase.